A 400-amino-acid chain; its full sequence is MLEFFSRLSLVTKIIIAIILGIGVALLFPTVTPYLSLFGELFIKALKSVAPILVFVLVLSSIANFQVGHSANLRPVLLLYVVGMLLAAFSAVIASLSFPSTLYLNTVSHNNLQAPGSLADILKNLLLSFIANPVQAISEANFIGILAWAIGLGLAMRHSSDTTKQVMQDVSHAVSAIIHKVIAFAPVGIFGLVAVTFADAGLATLESYAQLLAVLLGTMLFVALVINPILVGLTIRGNPYPLVFKCLKESGITAFFTRSSAANIPVNLDLAERLGVNPSTASVSIPLGATVNMAGAAVTITVLTLATVHTLGIHVDLATMIILSVVATISACGASGVAGGSLLLIPVACSLFGISSEIAMQVVAVGMIISVLQDSTETALNSSTDVLFTAAVDIRSRQNS.

Helical transmembrane passes span 14–34 (IIIA…VTPY), 48–68 (SVAP…FQVG), 76–96 (VLLL…IASL), 136–156 (AISE…GLAM), 177–197 (IIHK…AVTF), 211–231 (LLAV…PILV), 285–305 (IPLG…VLTL), 311–331 (LGIH…TISA), and 349–371 (CSLF…IISV).

This sequence belongs to the dicarboxylate/amino acid:cation symporter (DAACS) (TC 2.A.23) family.

The protein localises to the cell inner membrane. It carries out the reaction L-serine(in) + Na(+)(in) = L-serine(out) + Na(+)(out). The enzyme catalyses L-threonine(in) + Na(+)(in) = L-threonine(out) + Na(+)(out). Involved in the import of serine and threonine into the cell, with the concomitant import of sodium (symport system). The chain is Serine/threonine transporter SstT from Acinetobacter baumannii (strain ATCC 17978 / DSM 105126 / CIP 53.77 / LMG 1025 / NCDC KC755 / 5377).